A 520-amino-acid polypeptide reads, in one-letter code: Poly(A)-specific ribonuclease PNLDC1 (520 aa).

Mg(2+) is bound by residues Asp-17, Glu-19, Asp-260, and Asp-354. Residues Cys-497–Phe-513 form a helical membrane-spanning segment.

Belongs to the CAF1 family. It depends on Mg(2+) as a cofactor.

It is found in the endoplasmic reticulum membrane. The enzyme catalyses Exonucleolytic cleavage of poly(A) to 5'-AMP.. 3'-exoribonuclease that has a preference for poly(A) tails of mRNAs, thereby efficiently degrading poly(A) tails. Exonucleolytic degradation of the poly(A) tail is often the first step in the decay of eukaryotic mRNAs and is also used to silence certain maternal mRNAs translationally during oocyte maturation and early embryonic development. May act as a regulator of multipotency in embryonic stem cells. Is a critical factor for proper spermatogenesis, involved in pre-piRNAs processing to generate mature piRNAs. This chain is Poly(A)-specific ribonuclease PNLDC1, found in Pongo abelii (Sumatran orangutan).